We begin with the raw amino-acid sequence, 65 residues long: UPF0337 protein gbs1203 (65 aa).

Positions 1–12 are enriched in basic and acidic residues; the sequence is MSEEKFDAKVDK. The disordered stretch occupies residues 1–29; the sequence is MSEEKFDAKVDKVSGSVKESVGKLTGDKE.

Belongs to the UPF0337 (CsbD) family.

This Streptococcus agalactiae serotype III (strain NEM316) protein is UPF0337 protein gbs1203.